Here is a 263-residue protein sequence, read N- to C-terminus: MYLNNNNNMKYYINSPLEQFEIRDLLGLTSPMMDFSFINITNFGLYTMITLLVILTMNLMTNNYNKLVGSNWYLSQEMIYDTIMNMVKTQIGGKVWGYYFPLVYTFFITIFTMNLISMIPYSFAMTSHVVFVVSMSMIIWLGTTIIGFYTHGLKFFGLFLPTGTPLILVPLLVSIELLSYFARTISLGLRLSANIMAGHLLIVILGGLLFNLMAMNILTFLLGFLPMIAILGIVCLEFAITIIQAYVWCILMSSYLKDTIYLH.

The propeptide at 1 to 14 (MYLNNNNNMKYYIN) is removed in mature form. The next 6 membrane-spanning stretches (helical) occupy residues 35-57 (FSFINITNFGLYTMITLLVILTM), 95-117 (VWGYYFPLVYTFFITIFTMNLIS), 129-151 (VVFVVSMSMIIWLGTTIIGFYTH), 156-178 (FGLFLPTGTPLILVPLLVSIELL), 191-213 (LSANIMAGHLLIVILGGLLFNLM), and 228-250 (IAILGIVCLEFAITIIQAYVWCI).

It belongs to the ATPase A chain family. In terms of assembly, F-type ATPases have 2 components, CF(1) - the catalytic core - and CF(0) - the membrane proton channel. In yeast, the dimeric form of ATP synthase consists of 18 polypeptides: alpha, beta, gamma, delta, epsilon, 4 (B), 5 (OSCP), 6 (A), 8, 9 (C), d, E (Tim11), f, g, h, i, j and k.

The protein resides in the mitochondrion inner membrane. Its function is as follows. Mitochondrial membrane ATP synthase (F(1)F(0) ATP synthase or Complex V) produces ATP from ADP in the presence of a proton gradient across the membrane which is generated by electron transport complexes of the respiratory chain. F-type ATPases consist of two structural domains, F(1) - containing the extramembraneous catalytic core and F(0) - containing the membrane proton channel, linked together by a central stalk and a peripheral stalk. During catalysis, ATP synthesis in the catalytic domain of F(1) is coupled via a rotary mechanism of the central stalk subunits to proton translocation. Key component of the proton channel; it may play a direct role in the translocation of protons across the membrane. The polypeptide is ATP synthase subunit a (ATP6) (Eremothecium gossypii (strain ATCC 10895 / CBS 109.51 / FGSC 9923 / NRRL Y-1056) (Yeast)).